The primary structure comprises 148 residues: Small ribosomal subunit protein bS6 (148 aa).

The interval 96–148 (HEEGQSAMLTRRDDRRERDGDDRPRRREGGFDRGDRGDRGPRRPRDNEAGEGA) is disordered.

Belongs to the bacterial ribosomal protein bS6 family.

In terms of biological role, binds together with bS18 to 16S ribosomal RNA. This Brucella melitensis biotype 1 (strain ATCC 23456 / CCUG 17765 / NCTC 10094 / 16M) protein is Small ribosomal subunit protein bS6.